Consider the following 228-residue polypeptide: LexA repressor (228 aa).

The segment at residues 26-46 (FDEMKDALDLRSKSGIHRLIT) is a DNA-binding region (H-T-H motif). Catalysis depends on for autocatalytic cleavage activity residues serine 149 and lysine 187.

The protein belongs to the peptidase S24 family. As to quaternary structure, homodimer.

The catalysed reaction is Hydrolysis of Ala-|-Gly bond in repressor LexA.. In terms of biological role, represses a number of genes involved in the response to DNA damage (SOS response), including recA and lexA. Has been shown to bind to the direct repeat sequence 5'-GTT-N(7)-GTTC-3'. In the presence of single-stranded DNA, RecA interacts with LexA causing an autocatalytic cleavage which disrupts the DNA-binding part of LexA, leading to derepression of the SOS regulon and eventually DNA repair. This is LexA repressor from Cereibacter sphaeroides (strain ATCC 17023 / DSM 158 / JCM 6121 / CCUG 31486 / LMG 2827 / NBRC 12203 / NCIMB 8253 / ATH 2.4.1.) (Rhodobacter sphaeroides).